Consider the following 348-residue polypeptide: Chaperone protein DnaJ (348 aa).

Residues 3–65 enclose the J domain; that stretch reads DLYGILGVDH…EQRQRYDRHV (63 aa). The segment at 109–191 adopts a CR-type zinc-finger fold; sequence GGSQVVKIDS…CYGNGSRSAP (83 aa). Cys122, Cys125, Cys139, Cys142, Cys165, Cys168, Cys179, and Cys182 together coordinate Zn(2+). 4 CXXCXGXG motif repeats span residues 122–129, 139–146, 165–172, and 179–186; these read CDVCNGTR, CFDCNGSG, CSKCRGNG, and CRRCYGNG.

It belongs to the DnaJ family. Homodimer. It depends on Zn(2+) as a cofactor.

It localises to the cytoplasm. Its function is as follows. Participates actively in the response to hyperosmotic and heat shock by preventing the aggregation of stress-denatured proteins and by disaggregating proteins, also in an autonomous, DnaK-independent fashion. Unfolded proteins bind initially to DnaJ; upon interaction with the DnaJ-bound protein, DnaK hydrolyzes its bound ATP, resulting in the formation of a stable complex. GrpE releases ADP from DnaK; ATP binding to DnaK triggers the release of the substrate protein, thus completing the reaction cycle. Several rounds of ATP-dependent interactions between DnaJ, DnaK and GrpE are required for fully efficient folding. Also involved, together with DnaK and GrpE, in the DNA replication of plasmids through activation of initiation proteins. This Tropheryma whipplei (strain TW08/27) (Whipple's bacillus) protein is Chaperone protein DnaJ.